The sequence spans 210 residues: Large ribosomal subunit protein bL25 (210 aa).

The tract at residues 191-210 (KPAPKAAETDEDGEEAASEE) is disordered. Residues 199–210 (TDEDGEEAASEE) show a composition bias toward acidic residues.

It belongs to the bacterial ribosomal protein bL25 family. CTC subfamily. In terms of assembly, part of the 50S ribosomal subunit; part of the 5S rRNA/L5/L18/L25 subcomplex. Contacts the 5S rRNA. Binds to the 5S rRNA independently of L5 and L18.

In terms of biological role, this is one of the proteins that binds to the 5S RNA in the ribosome where it forms part of the central protuberance. The protein is Large ribosomal subunit protein bL25 of Alteromonas mediterranea (strain DSM 17117 / CIP 110805 / LMG 28347 / Deep ecotype).